Consider the following 223-residue polypeptide: Ribose-5-phosphate isomerase A (223 aa).

Residues 29-32 (TGST), 82-85 (DGAD), and 95-98 (KGGG) each bind substrate. Catalysis depends on Glu104, which acts as the Proton acceptor. A substrate-binding site is contributed by Lys122.

This sequence belongs to the ribose 5-phosphate isomerase family. In terms of assembly, homodimer.

It catalyses the reaction aldehydo-D-ribose 5-phosphate = D-ribulose 5-phosphate. The protein operates within carbohydrate degradation; pentose phosphate pathway; D-ribose 5-phosphate from D-ribulose 5-phosphate (non-oxidative stage): step 1/1. Functionally, catalyzes the reversible conversion of ribose-5-phosphate to ribulose 5-phosphate. The sequence is that of Ribose-5-phosphate isomerase A from Neisseria meningitidis serogroup B (strain ATCC BAA-335 / MC58).